A 457-amino-acid polypeptide reads, in one-letter code: Phosphomethylpyrimidine synthase (457 aa).

Residues asparagine 80, methionine 109, tyrosine 139, histidine 175, 195–197 (SRG), 236–239 (DSLR), and glutamate 275 contribute to the substrate site. Histidine 279 lines the Zn(2+) pocket. Tyrosine 302 serves as a coordination point for substrate. Histidine 343 provides a ligand contact to Zn(2+). 3 residues coordinate [4Fe-4S] cluster: cysteine 423, cysteine 426, and cysteine 431.

Belongs to the ThiC family. Requires [4Fe-4S] cluster as cofactor.

It carries out the reaction 5-amino-1-(5-phospho-beta-D-ribosyl)imidazole + S-adenosyl-L-methionine = 4-amino-2-methyl-5-(phosphooxymethyl)pyrimidine + CO + 5'-deoxyadenosine + formate + L-methionine + 3 H(+). It participates in cofactor biosynthesis; thiamine diphosphate biosynthesis. In terms of biological role, catalyzes the synthesis of the hydroxymethylpyrimidine phosphate (HMP-P) moiety of thiamine from aminoimidazole ribotide (AIR) in a radical S-adenosyl-L-methionine (SAM)-dependent reaction. The chain is Phosphomethylpyrimidine synthase from Nostoc punctiforme (strain ATCC 29133 / PCC 73102).